Reading from the N-terminus, the 90-residue chain is DNA-binding protein HU-1 (90 aa).

Threonine 4 is subject to Phosphothreonine.

This sequence belongs to the bacterial histone-like protein family. In terms of assembly, homodimer.

Functionally, histone-like DNA-binding protein which is capable of wrapping DNA to stabilize it, and thus to prevent its denaturation under extreme environmental conditions. This is DNA-binding protein HU-1 (hup2) from Halalkalibacterium halodurans (strain ATCC BAA-125 / DSM 18197 / FERM 7344 / JCM 9153 / C-125) (Bacillus halodurans).